A 339-amino-acid polypeptide reads, in one-letter code: Ubiquitin carboxyl-terminal hydrolase 50 (339 aa).

Residues 44 to 339 (TGLWNLGNTC…AFCKNSVTQA (296 aa)) enclose the USP domain. Cys53 serves as the catalytic Nucleophile. Catalysis depends on His327, which acts as the Proton acceptor.

It belongs to the peptidase C19 family. Weakly expressed in a few tissues.

The protein localises to the cytoplasm. It localises to the cytoskeleton. The protein resides in the microtubule organizing center. Its subcellular location is the centrosome. It is found in the nucleus. The catalysed reaction is Thiol-dependent hydrolysis of ester, thioester, amide, peptide and isopeptide bonds formed by the C-terminal Gly of ubiquitin (a 76-residue protein attached to proteins as an intracellular targeting signal).. Its function is as follows. Deubiquitinating enzyme that removes conjugated ubiquitin from specific proteins to regulate different cellular processes. Regulates the inflammasome signaling pathway by deubiquitinating 'Lys-63'-linked polyubiquitination of the PYCARD/ASC adapter protein. Regulates the ubiquitination and stability of the ACE2 protein. Acts as a negative regulator of the G2/M checkpoint pathway, by preventing serine/threonine kinase WEE1 degradation, thereby repressing entry into mitosis following activation of the G2/M DNA damage checkpoint. This chain is Ubiquitin carboxyl-terminal hydrolase 50, found in Homo sapiens (Human).